We begin with the raw amino-acid sequence, 574 residues long: Dihydroxy-acid dehydratase 2 (574 aa).

Residues methionine 1–proline 20 form a disordered region. Residue cysteine 56 coordinates [2Fe-2S] cluster. A Mg(2+)-binding site is contributed by aspartate 88. [2Fe-2S] cluster is bound at residue cysteine 129. Mg(2+) is bound by residues aspartate 130 and lysine 131. Lysine 131 carries the N6-carboxylysine modification. Cysteine 201 contributes to the [2Fe-2S] cluster binding site. Glutamate 451 contacts Mg(2+). The Proton acceptor role is filled by serine 477.

Belongs to the IlvD/Edd family. In terms of assembly, homodimer. The cofactor is [2Fe-2S] cluster. Mg(2+) is required as a cofactor.

The catalysed reaction is (2R)-2,3-dihydroxy-3-methylbutanoate = 3-methyl-2-oxobutanoate + H2O. It catalyses the reaction (2R,3R)-2,3-dihydroxy-3-methylpentanoate = (S)-3-methyl-2-oxopentanoate + H2O. The protein operates within amino-acid biosynthesis; L-isoleucine biosynthesis; L-isoleucine from 2-oxobutanoate: step 3/4. It functions in the pathway amino-acid biosynthesis; L-valine biosynthesis; L-valine from pyruvate: step 3/4. Its function is as follows. Functions in the biosynthesis of branched-chain amino acids. Catalyzes the dehydration of (2R,3R)-2,3-dihydroxy-3-methylpentanoate (2,3-dihydroxy-3-methylvalerate) into 2-oxo-3-methylpentanoate (2-oxo-3-methylvalerate) and of (2R)-2,3-dihydroxy-3-methylbutanoate (2,3-dihydroxyisovalerate) into 2-oxo-3-methylbutanoate (2-oxoisovalerate), the penultimate precursor to L-isoleucine and L-valine, respectively. The sequence is that of Dihydroxy-acid dehydratase 2 from Bradyrhizobium diazoefficiens (strain JCM 10833 / BCRC 13528 / IAM 13628 / NBRC 14792 / USDA 110).